Here is a 187-residue protein sequence, read N- to C-terminus: Adenylate kinase (187 aa).

10–15 (GSGKGT) is an ATP binding site. The tract at residues 30–59 (STGDMLRAEIAAGSELGKQAKAVMDAGNLV) is NMP. AMP-binding positions include threonine 31, arginine 36, 57 to 59 (NLV), 85 to 88 (GYPR), and glutamine 92. The segment at 126–136 (GRAKEQGRADD) is LID. Residue arginine 127 participates in ATP binding. AMP is bound by residues arginine 133 and arginine 144. Glycine 172 serves as a coordination point for ATP.

Belongs to the adenylate kinase family. In terms of assembly, monomer.

It localises to the cytoplasm. The enzyme catalyses AMP + ATP = 2 ADP. The protein operates within purine metabolism; AMP biosynthesis via salvage pathway; AMP from ADP: step 1/1. Functionally, catalyzes the reversible transfer of the terminal phosphate group between ATP and AMP. Plays an important role in cellular energy homeostasis and in adenine nucleotide metabolism. The polypeptide is Adenylate kinase (Stenotrophomonas maltophilia (strain R551-3)).